A 208-amino-acid polypeptide reads, in one-letter code: Large ribosomal subunit protein uL3 (208 aa).

The tract at residues histidine 124 to proline 146 is disordered.

This sequence belongs to the universal ribosomal protein uL3 family. In terms of assembly, part of the 50S ribosomal subunit. Forms a cluster with proteins L14 and L19.

One of the primary rRNA binding proteins, it binds directly near the 3'-end of the 23S rRNA, where it nucleates assembly of the 50S subunit. This Streptococcus thermophilus (strain ATCC BAA-491 / LMD-9) protein is Large ribosomal subunit protein uL3.